The sequence spans 72 residues: Translation initiation factor IF-1 (72 aa).

An S1-like domain is found at 1–72 (MSKNDVIEVE…TRGRIVYRFK (72 aa)).

This sequence belongs to the IF-1 family. In terms of assembly, component of the 30S ribosomal translation pre-initiation complex which assembles on the 30S ribosome in the order IF-2 and IF-3, IF-1 and N-formylmethionyl-tRNA(fMet); mRNA recruitment can occur at any time during PIC assembly.

Its subcellular location is the cytoplasm. Its function is as follows. One of the essential components for the initiation of protein synthesis. Stabilizes the binding of IF-2 and IF-3 on the 30S subunit to which N-formylmethionyl-tRNA(fMet) subsequently binds. Helps modulate mRNA selection, yielding the 30S pre-initiation complex (PIC). Upon addition of the 50S ribosomal subunit IF-1, IF-2 and IF-3 are released leaving the mature 70S translation initiation complex. The sequence is that of Translation initiation factor IF-1 from Desulforamulus reducens (strain ATCC BAA-1160 / DSM 100696 / MI-1) (Desulfotomaculum reducens).